We begin with the raw amino-acid sequence, 818 residues long: Dipeptidyl-peptidase 7 (818 aa).

An N-terminal signal peptide occupies residues 1–22 (MKLKRILLSVALLCGIGTTAMA). Residues H87, D223, and S645 each act as charge relay system in the active site.

It belongs to the peptidase S46 family.

Catalyzes the removal of dipeptides from the N-terminus of oligopeptides. Most efficiently cleaves the synthetic substrate Met-Leu-methylcoumaryl-7-amide (Met-Leu-MCA), and slowly hydrolyzes Leu-Gln-, Lys-Ala-, Leu-Arg, and Ala-Asn-MCA. Is likely involved in amino acid metabolism and bacterial growth/survival of asaccharolytic P.endodontalis, that utilizes amino acids from extracellular proteinaceous nutrients as energy and carbon sources. In Porphyromonas endodontalis (strain ATCC 35406 / DSM 24491 / JCM 8526 / CCUG 16442 / BCRC 14492 / NCTC 13058 / HG 370) (Bacteroides endodontalis), this protein is Dipeptidyl-peptidase 7.